Here is a 943-residue protein sequence, read N- to C-terminus: Isoleucine--tRNA ligase (943 aa).

The 'HIGH' region signature appears at 59–69 (PYANGQIHLGH). Glu-577 serves as a coordination point for L-isoleucyl-5'-AMP. Residues 618–622 (KMSKS) carry the 'KMSKS' region motif. Lys-621 is a binding site for ATP. Zn(2+)-binding residues include Cys-906, Cys-909, Cys-926, and Cys-929.

The protein belongs to the class-I aminoacyl-tRNA synthetase family. IleS type 1 subfamily. In terms of assembly, monomer. Zn(2+) is required as a cofactor.

It localises to the cytoplasm. It carries out the reaction tRNA(Ile) + L-isoleucine + ATP = L-isoleucyl-tRNA(Ile) + AMP + diphosphate. Catalyzes the attachment of isoleucine to tRNA(Ile). As IleRS can inadvertently accommodate and process structurally similar amino acids such as valine, to avoid such errors it has two additional distinct tRNA(Ile)-dependent editing activities. One activity is designated as 'pretransfer' editing and involves the hydrolysis of activated Val-AMP. The other activity is designated 'posttransfer' editing and involves deacylation of mischarged Val-tRNA(Ile). The chain is Isoleucine--tRNA ligase from Xanthomonas oryzae pv. oryzae (strain MAFF 311018).